The primary structure comprises 625 residues: tRNA uridine 5-carboxymethylaminomethyl modification enzyme MnmG (625 aa).

FAD-binding positions include 10-15 (GGGHAG), V122, and S177. 271-285 (GPRYCPSIEDKVNRF) is a binding site for NAD(+). Residue Q368 participates in FAD binding.

Belongs to the MnmG family. In terms of assembly, homodimer. Heterotetramer of two MnmE and two MnmG subunits. FAD is required as a cofactor.

It is found in the cytoplasm. Its function is as follows. NAD-binding protein involved in the addition of a carboxymethylaminomethyl (cmnm) group at the wobble position (U34) of certain tRNAs, forming tRNA-cmnm(5)s(2)U34. This is tRNA uridine 5-carboxymethylaminomethyl modification enzyme MnmG from Wolinella succinogenes (strain ATCC 29543 / DSM 1740 / CCUG 13145 / JCM 31913 / LMG 7466 / NCTC 11488 / FDC 602W) (Vibrio succinogenes).